The following is a 426-amino-acid chain: Putative phosphate permease CPn_0680/CP_0067/CPj0680/CpB0707 (426 aa).

Transmembrane regions (helical) follow at residues Met1 to Ala21, Ala42 to Ala62, Thr87 to Val107, Ser112 to Trp132, Ile137 to Phe157, Phe180 to Leu200, Trp207 to Val227, Leu260 to Ala280, Leu313 to Ile333, Ile364 to Leu384, and Ile399 to Phe419.

Belongs to the inorganic phosphate transporter (PiT) (TC 2.A.20) family.

It is found in the cell membrane. Functionally, potential transporter for phosphate. In Chlamydia pneumoniae (Chlamydophila pneumoniae), this protein is Putative phosphate permease CPn_0680/CP_0067/CPj0680/CpB0707.